Consider the following 173-residue polypeptide: Lectin BRA-2 (173 aa).

The N-linked (GlcNAc...) asparagine glycan is linked to asparagine 39. Disulfide bonds link cysteine 47–cysteine 61, cysteine 78–cysteine 168, and cysteine 144–cysteine 160. Residues 51–170 (PNGWVTSENK…NDRYNFVCEI (120 aa)) enclose the C-type lectin domain.

Homohexamer; disulfide-linked. In terms of tissue distribution, coelemic fluid.

Its function is as follows. Sugar-binding protein which recognizes specific carbohydrate structures and agglutinates a variety of animal cells by binding to cell-surface glycoproteins and glycolipids. Calcium-dependent lectin. Invertebrate lectins may be involved in defense functions. The sequence is that of Lectin BRA-2 from Megabalanus rosa (Acorn barnacle).